Reading from the N-terminus, the 304-residue chain is MKKKILFWILGIIGILIIGGGAYAYSIYSSVSKTLDEVHKPLKRDKDSKGTEEVKISKSEPVSILLLGVDERGNEKGRSDSLILITLNPKNNSMKTVSIPRDTYTEIVGKGKSDKINHAYAFGGVDMSVATVEKFLNVPINYYIEVNMAGFKDIVDAVGGVDVNNDLEFKQDKHHFAKGNIHLTGDEALSFTRMRYEDPRGDFGRQMRQRQVMQAVIKKGATFSSLTSYGDVLTAIQKNVKTNLTQDQMFDMQKNYKNCLENSEDIQIPGDGHKAADGIWYYYVPEAAKQDLTNKLRAHLEVTK.

Residues Met1–Lys4 are Cytoplasmic-facing. The helical; Signal-anchor for type II membrane protein transmembrane segment at Ile5–Tyr25 threads the bilayer. At Ser26–Lys304 the chain is on the extracellular side.

This sequence belongs to the LytR/CpsA/Psr (LCP) family.

It is found in the cell membrane. It functions in the pathway cell wall biogenesis. Its function is as follows. May catalyze the final step in cell wall teichoic acid biosynthesis, the transfer of the anionic cell wall polymers (APs) from their lipid-linked precursor to the cell wall peptidoglycan (PG). The protein is Polyisoprenyl-teichoic acid--peptidoglycan teichoic acid transferase TagU of Bacillus cereus (strain ATCC 14579 / DSM 31 / CCUG 7414 / JCM 2152 / NBRC 15305 / NCIMB 9373 / NCTC 2599 / NRRL B-3711).